Reading from the N-terminus, the 367-residue chain is Leu/Ile/Val-binding protein BraC3 (367 aa).

Positions 1–22 are cleaved as a signal peptide; the sequence is MTLKTLTATLVASLAFAPLAHA.

It belongs to the leucine-binding protein family. The complex is composed of two ATP-binding proteins (BraF and BraG), two transmembrane proteins (BraD and BraE) and a solute-binding protein (BraC or BraC3).

The protein localises to the periplasm. In terms of biological role, part of the ABC transporter complex BraDEFGC/C3 involved in transport of branched-chain amino acids Leu, Ile and Val (LIV). Essential for the development of bacteroids, the differentiated legume-symbiotic forms of this bacterium, and for the effective N(2) fixation by them. The polypeptide is Leu/Ile/Val-binding protein BraC3 (Rhizobium johnstonii (strain DSM 114642 / LMG 32736 / 3841) (Rhizobium leguminosarum bv. viciae)).